Here is a 91-residue protein sequence, read N- to C-terminus: Probable Fe(2+)-trafficking protein (91 aa).

The protein belongs to the Fe(2+)-trafficking protein family.

Its function is as follows. Could be a mediator in iron transactions between iron acquisition and iron-requiring processes, such as synthesis and/or repair of Fe-S clusters in biosynthetic enzymes. The protein is Probable Fe(2+)-trafficking protein of Ralstonia pickettii (strain 12J).